The primary structure comprises 210 residues: Thymidylate kinase (210 aa).

10–17 provides a ligand contact to ATP; sequence GPEGAGKS.

Belongs to the thymidylate kinase family.

It carries out the reaction dTMP + ATP = dTDP + ADP. Phosphorylation of dTMP to form dTDP in both de novo and salvage pathways of dTTP synthesis. In Pseudomonas putida (strain GB-1), this protein is Thymidylate kinase.